We begin with the raw amino-acid sequence, 61 residues long: MAQFLGLGDIGGNLVYELIMILYKIFKFISLKILDGLGNFMEIALEYLVKFVYQITRFIHR.

This is an uncharacterized protein from Acidianus bottle-shaped virus (isolate Italy/Pozzuoli) (ABV).